Reading from the N-terminus, the 384-residue chain is uncharacterized protein (384 aa).

Transmembrane regions (helical) follow at residues 11–31 (LWFIAISAAGGFILSLTGISI), 33–53 (WMIGTLIVACCLAMIRPAWLM), 66–86 (LALGQMILGIELGQKLNLSVL), 94–114 (FSVGVMLILSILLAMLSGYVL), 153–173 (LVQMMRVLLVVLSIPFLVILI), 197–217 (LAPVLWTVILILAAWGACKAA), 224–244 (APWLLGSMLGVAIVHVGGAAV), 284–304 (IIIVGFVSSVGLIAAMFLSAV), 309–329 (LTGISLITSVLAFAPGGIAEM), and 342–362 (FVVAVQVIRVILVIALLPPFY).

Belongs to the AbrB family.

The protein resides in the cell membrane. This is an uncharacterized protein from Bacillus subtilis (strain 168).